A 96-amino-acid chain; its full sequence is MNIRPLHDRVIVERQEVESKSAGGIVLTGSAAEKSTRGVVLAVGKGRILENGTVQELDVKVGDTVIFAEGYGTKSEKIDGKEVLIMSENDIMAIVE.

It belongs to the GroES chaperonin family. Heptamer of 7 subunits arranged in a ring. Interacts with the chaperonin GroEL.

The protein localises to the cytoplasm. Functionally, together with the chaperonin GroEL, plays an essential role in assisting protein folding. The GroEL-GroES system forms a nano-cage that allows encapsulation of the non-native substrate proteins and provides a physical environment optimized to promote and accelerate protein folding. GroES binds to the apical surface of the GroEL ring, thereby capping the opening of the GroEL channel. This chain is Co-chaperonin GroES, found in Photobacterium profundum (strain SS9).